The sequence spans 1392 residues: ABC transporter G family member 42 (1392 aa).

Over residues 1–18 the composition is skewed to polar residues; sequence MTMSQTDGVEFASRNTNE. The tract at residues 1 to 26 is disordered; the sequence is MTMSQTDGVEFASRNTNENGHDDDDQ. Residues 139 to 413 form the ABC transporter 1 domain; sequence SKLSRFMCSN…FEDCGFKCPN (275 aa). Residue 173–180 participates in ATP binding; the sequence is GPPSCGKT. The ABC transmembrane type-2 1 domain occupies 491–703; sequence DMLKACSRRE…AEIGLTANEF (213 aa). Transmembrane regions (helical) follow at residues 509–529, 543–563, 596–616, 627–647, 652–672, and 739–759; these read FVYV…MTVY, YLMG…LPEL, IPIS…VIGY, FLIL…IAAV, VVAT…GGFI, and FGAL…ALTF. In terms of domain architecture, ABC transporter 2 spans 800–1045; the sequence is FTFQDVQYII…VIEYFMRIHG (246 aa). An ATP-binding site is contributed by 837–844; sequence GVSGAGKT. One can recognise an ABC transmembrane type-2 2 domain in the interval 1117–1331; it reads EQFKACLWKQ…VLNGLLTSQY (215 aa). 7 helical membrane-spanning segments follow: residues 1136–1156, 1175–1195, 1215–1237, 1255–1275, 1281–1301, 1309–1329, and 1364–1384; these read YNLT…ILFW, MFTV…FSVA, YSLA…YVII, FYSI…LVVV, IAFT…GYVM, WWIW…LLTS, and LVAV…AFFI.

Belongs to the ABC transporter superfamily. ABCG family. PDR (TC 3.A.1.205) subfamily. In terms of tissue distribution, confined to shoots.

The protein resides in the membrane. May be a general defense protein. The polypeptide is ABC transporter G family member 42 (ABCG42) (Arabidopsis thaliana (Mouse-ear cress)).